The primary structure comprises 515 residues: GMP synthase [glutamine-hydrolyzing] (515 aa).

The Glutamine amidotransferase type-1 domain maps to Thr10–Gly200. Cys87 serves as the catalytic Nucleophile. Catalysis depends on residues His174 and Glu176. The GMPS ATP-PPase domain occupies Trp201–Arg390. ATP is bound at residue Ser228–Ser234.

In terms of assembly, homodimer.

The enzyme catalyses XMP + L-glutamine + ATP + H2O = GMP + L-glutamate + AMP + diphosphate + 2 H(+). It participates in purine metabolism; GMP biosynthesis; GMP from XMP (L-Gln route): step 1/1. In terms of biological role, catalyzes the synthesis of GMP from XMP. The sequence is that of GMP synthase [glutamine-hydrolyzing] from Bacillus cereus (strain ATCC 14579 / DSM 31 / CCUG 7414 / JCM 2152 / NBRC 15305 / NCIMB 9373 / NCTC 2599 / NRRL B-3711).